We begin with the raw amino-acid sequence, 465 residues long: Putative F-box/LRR-repeat protein At3g28410 (465 aa).

Positions 27 to 73 (ADFINYMPDDILHHILSFIPTDLAMRTSVLSRRWRHVWCETPCLDIK) constitute an F-box domain. LRR repeat units lie at residues 127–155 (VRDF…DVTL), 178–203 (FCQI…TLDT), 207–225 (LERL…DINR), 278–302 (ADRY…TVGE), 332–357 (FVRS…TLHT), 402–427 (TSKL…VVWL), and 447–465 (VETL…QSNC).

The chain is Putative F-box/LRR-repeat protein At3g28410 from Arabidopsis thaliana (Mouse-ear cress).